The sequence spans 202 residues: Recoverin (202 aa).

A lipid anchor (N-myristoyl glycine) is attached at glycine 2. The residue at position 39 (cysteine 39) is a Cysteine sulfenic acid (-SOH). EF-hand domains follow at residues serine 41–glutamate 59, aspartate 61–glycine 96, lysine 97–methionine 132, and threonine 147–isoleucine 182. 9 residues coordinate Ca(2+): aspartate 74, asparagine 76, aspartate 78, threonine 80, glutamate 85, aspartate 110, aspartate 112, asparagine 114, and glutamate 121. The tract at residues glutamate 189–lysine 192 is interaction with GRK1.

This sequence belongs to the recoverin family. In terms of assembly, homodimer; disulfide-linked. Homodimerization is caused by prolonged intense illumination. May form a complex composed of RHO, GRK1 and RCVRN in a Ca(2+)-dependent manner; RCVRN prevents the interaction between GRK1 and RHO. Interacts (via C-terminus) with GRK1 (via N-terminus); the interaction is Ca(2+)-dependent. In terms of processing, the N-terminal glycine is linked to one of four different types of acyl groups. The most abundant is myristoleate (14:1), but 14:0, 14:2, and 12:0 acyl residues are also present. The Ca(2+) induced exposure of the myristoyl group, known as the calcium-myristoyl switch, promotes RCVRN binding to the photoreceptor cell membranes only when intracellular Ca(2+) concentration is high. Post-translationally, oxidation on Cys-39 occurs in response to prolonged intense illumination and results in the formation of disulfide homodimers, and to a lesser extent disulfide-linked heterodimers.

The protein localises to the photoreceptor inner segment. It is found in the cell projection. The protein resides in the cilium. It localises to the photoreceptor outer segment. Its subcellular location is the photoreceptor outer segment membrane. The protein localises to the perikaryon. Functionally, acts as a calcium sensor and regulates phototransduction of cone and rod photoreceptor cells. Modulates light sensitivity of cone photoreceptor in dark and dim conditions. In response to high Ca(2+) levels induced by low light levels, prolongs RHO/rhodopsin activation in rod photoreceptor cells by binding to and inhibiting GRK1-mediated phosphorylation of RHO/rhodopsin. Plays a role in scotopic vision/enhances vision in dim light by enhancing signal transfer between rod photoreceptors and rod bipolar cells. Improves rod photoreceptor sensitivity in dim light and mediates response of rod photoreceptors to facilitate detection of change and motion in bright light. This is Recoverin (RCVRN) from Canis lupus familiaris (Dog).